The sequence spans 502 residues: MMDNDNQFWKRFLIFTILMFLFITAYELFYIYYVKPSQPQKTEKKEVVKKEEFKNVNLPQLMLGTFREKQEYKNTKTVKLGIYSLELSEKGGKILRFIDQKYGFDLISKAERELKIFPLEIFTGNPDLDQKLNFGEYEIKEGKNSVELIHKELKVKKILSYKNGAIHLSVEGLKPPFWVFVGSPPDDEAFYTHVGPVLKINGEVVRLDVDDLKGINEFEGNIEFGGEESRYFFKGAKDYQKHIVYKVKLGDKFVSLSTFLYDGEKTIYLGAKDYARLRELGLVDTLDWGTLKIIVKPLFLFLYWIYEHTGSWVLSILVLTFIVRIFLFPLGYKSVVSMQKLQELAPKMEKIKQKYKDDPVKMQEEMMKLYAETGFNPMAGCLPILLQIPIFFALYKVLIITVDLKVSSFLWIPSLADKDPYYILPVIMGLTMILQQKMTPSPDPKQALVGYITSVAFTLLFINFPAGLVLYWTLNNVFNIIQNYLIKEVLLKDKSKGGSKKK.

6 consecutive transmembrane segments (helical) span residues 12–32 (FLIFTILMFLFITAYELFYIY), 286–306 (LDWGTLKIIVKPLFLFLYWIY), 312–332 (WVLSILVLTFIVRIFLFPLGY), 382–402 (LPILLQIPIFFALYKVLIITV), 409–429 (FLWIPSLADKDPYYILPVIMG), and 452–472 (ITSVAFTLLFINFPAGLVLYW).

Belongs to the OXA1/ALB3/YidC family. Type 1 subfamily. In terms of assembly, interacts with the Sec translocase complex via SecD. Specifically interacts with transmembrane segments of nascent integral membrane proteins during membrane integration.

Its subcellular location is the cell membrane. Functionally, required for the insertion and/or proper folding and/or complex formation of integral membrane proteins into the membrane. Involved in integration of membrane proteins that insert both dependently and independently of the Sec translocase complex, as well as at least some lipoproteins. Aids folding of multispanning membrane proteins. This chain is Membrane protein insertase YidC, found in Aquifex aeolicus (strain VF5).